The primary structure comprises 168 residues: MSATVHYKDIRKGMEKDLESLFKKYDSDRNGKITYIEIVETLRKAGKKNPERIADLLFRDDTDKNGELTIEEAKLRIVRMNDEKIEKVLNWDVEKFINDNDKDGDRKITRDEVLQRFTEQGAEDPELITDSIFRQMDLDRDGVITCDEIKEFNRKKKFSFLKSSAPKQ.

EF-hand domains are found at residues 13–48, 48–83, 88–123, and 124–159; these read GMEK…AGKK, KNPE…MNDE, VLNW…QGAE, and DPEL…KKFS. Residues Asp-26, Asp-28, Asn-30, Lys-32, Glu-37, Asp-61, Asp-63, Asn-65, Glu-67, Glu-72, Asp-101, Asp-103, Asp-105, Lys-107, Glu-112, Asp-137, Asp-139, Asp-141, and Glu-148 each contribute to the Ca(2+) site.

In terms of biological role, not known; probably binds four calcium ions. This is Calcium-binding protein 2 (cbp2) from Dictyostelium discoideum (Social amoeba).